The chain runs to 325 residues: Coiled-coil domain-containing protein 160 (325 aa).

2 disordered regions span residues 18–45 (SAQD…KGME) and 81–123 (ENKR…CSTD). Over residues 81-91 (ENKRNISKNET) the composition is skewed to basic and acidic residues. Positions 92 to 123 (DTNSASYESSNVDVTTEESFNSTEDNSTCSTD) are enriched in polar residues. The stretch at 144 to 288 (KLCLNLLNEE…SVIKNELRTE (145 aa)) forms a coiled coil.

This sequence belongs to the CCDC160 family.

This is Coiled-coil domain-containing protein 160 (CCDC160) from Homo sapiens (Human).